Consider the following 856-residue polypeptide: MKPRPAGFVDNKLKQRVIQYLTSNKCGKYVDIGVLASDLQRVYSIDYGRRKRNAFRIQVEKVFSIISSEKELKNLTELEDEHLAKRARQGEEDNEYTESYSDDDSSMEDYPDPQSANHMNSSLLSLYRKGNPDSVSNTPEMEQRETTSSTPRISSKTGSIPLKTPAKDSEGGWFIDKTPSVKKDSFFLDLSCEKSNPKKPITEIQDSKDSSLLESDMKRKGKLKNKGSKRKKEDLQEVDGEIEAVLQKKAKARGLEFQISNVKFEDVGGNDMTLKEVCKMLIHMRHPEVYHHLGVVPPRGVLLHGPPGCGKTLLAHAIAGELDLPILKVAAPEIVSGVSGESEQKLRELFEQAVSNAPCIIFIDEIDAITPKREVASKDMERRIVAQLLTCMDDLNNVAATARVLVIGATNRPDSLDPALRRAGRFDREICLGIPDEASRERILQTLCRKLRLPQAFDFCHLAHLTPGFVGADLMALCREAAMCAVNRVLMKLQEQQKKNPEMEDLPSKGVQEERLGTEPTSETQDELQRLLGLLRDQDPLSEEQMQGLCIELNDFIVALSSVQPSAKREGFVTVPNVTWADIGALEDIREELTMAILAPVRNPDQFKALGLVTPAGVLLAGPPGCGKTLLAKAVANESGLNFISVKGPELLNMYVGESERAVRQVFQRAKNSAPCVIFFDEVDALCPRRSDRETGASVRVVNQLLTEMDGLEARQQVFIMAATNRPDIIDPAILRPGRLDKTLFVGLPPPADRLAILKTITKNGTKPPLDADVNLEAIAGDLRCDCYTGADLSALVREASICALRQEMARQKSGNEKGELKVSHKHFEEAFKKVRSSISKKDQIMYERLQESLSR.

Positions 1 to 220 are interaction with RPL5; sequence MKPRPAGFVD…SLLESDMKRK (220 aa). The Nucleolar localization signal signature appears at 49 to 52; it reads RRKR. At Lys70 the chain carries N6-acetyllysine. The interval 84 to 175 is disordered; that stretch reads AKRARQGEED…AKDSEGGWFI (92 aa). The Nuclear localization signal signature appears at 85 to 88; the sequence is KRAR. Over residues 92 to 111 the composition is skewed to acidic residues; it reads EDNEYTESYSDDDSSMEDYP. Polar residues-rich tracts occupy residues 114 to 124 and 133 to 158; these read QSANHMNSSLL and DSVS…SKTG. Position 134 is a phosphoserine (Ser134). Thr138 is subject to Phosphothreonine. At Lys156 the chain carries N6-acetyllysine. A Phosphoserine modification is found at Ser191. The segment at 197 to 236 is disordered; the sequence is PKKPITEIQDSKDSSLLESDMKRKGKLKNKGSKRKKEDLQ. Residues 205–218 are compositionally biased toward basic and acidic residues; sequence QDSKDSSLLESDMK. A Glycyl lysine isopeptide (Lys-Gly) (interchain with G-Cter in SUMO2) cross-link involves residue Lys208. A phosphoserine mark is found at Ser211 and Ser215. The short motif at 218–232 is the Nuclear localization signal element; that stretch reads KRKGKLKNKGSKRKK. The segment covering 219–230 has biased composition (basic residues); the sequence is RKGKLKNKGSKR. The interaction with WDR74 stretch occupies residues 267 to 474; that stretch reads VGGNDMTLKE…LTPGFVGADL (208 aa). 305 to 312 is an ATP binding site; that stretch reads GPPGCGKT. The segment at 496 to 523 is disordered; that stretch reads QQKKNPEMEDLPSKGVQEERLGTEPTSE. 622–629 lines the ATP pocket; the sequence is GPPGCGKT.

Belongs to the AAA ATPase family. Interacts with NCL/nucleolin. Isoform 1 and isoform 2 interact with TERT and isoform 1 exhibits a higher binding affinity for TERT compared to isoform 2. Isoform 1 interacts with MTREX in an ATP-dependent manner; the interaction is required to associate NVL with nuclear RNA exosome. Isoform 1 interacts with RPL5 in an ATP-dependent manner. Interacts with WDR74 (through WDR repeats); the interaction is independent of RNA or pre-60S ribosome particles. As to expression, widely expressed. Highest level of expression in heart, placenta, skeletal muscle, pancreas and retina.

Its subcellular location is the nucleus. It is found in the nucleoplasm. The protein resides in the nucleolus. Its function is as follows. Participates in the assembly of the telomerase holoenzyme and effecting of telomerase activity via its interaction with TERT. Involved in both early and late stages of the pre-rRNA processing pathways. Spatiotemporally regulates 60S ribosomal subunit biogenesis in the nucleolus. Catalyzes the release of specific assembly factors, such as WDR74, from pre-60S ribosomal particles through the ATPase activity. This chain is Nuclear valosin-containing protein-like, found in Homo sapiens (Human).